A 700-amino-acid polypeptide reads, in one-letter code: Receptor-type tyrosine-protein phosphatase epsilon (700 aa).

The signal sequence occupies residues 1–19 (MEPLCPLLLVGFSLPLARA). The Extracellular segment spans residues 20–46 (LRGNETTADSNETTTTSGPPDPGASQP). Asn23 and Asn30 each carry an N-linked (GlcNAc...) asparagine glycan. Residues 47–69 (LLAWLLLPLLLLLLVLLLAAYFF) form a helical membrane-spanning segment. The Cytoplasmic segment spans residues 70–700 (RFRKQRKAVV…DIFSDYANFK (631 aa)). Tyrosine-protein phosphatase domains follow at residues 135-394 (FREE…LLEY) and 426-689 (LEEE…VQDF). Residues Asp303, 335-341 (CSAGVGR), and Gln379 contribute to the substrate site. Cys335 acts as the Phosphocysteine intermediate in catalysis. The Phosphocysteine intermediate role is filled by Cys630. Tyr696 carries the phosphotyrosine modification.

This sequence belongs to the protein-tyrosine phosphatase family. Receptor class 4 subfamily. As to quaternary structure, monomer. Isoform 2: Homodimer. Can form oligomers. Dimerization is increased by oxidative stress and decreased by EGFR. Isoform 2 interacts with GRB2. In terms of processing, a catalytically active cytoplasmic form (p65) is produced by proteolytic cleavage of either isoform 1, isoform 2 or isoform 3. Isoform 1 and isoform 2 are phosphorylated on tyrosine residues by tyrosine kinase Neu. Post-translationally, isoform 1 is glycosylated. In terms of tissue distribution, expressed in giant cell tumor (osteoclastoma rich in multinucleated osteoclastic cells).

Its subcellular location is the cell membrane. It is found in the cytoplasm. The enzyme catalyses O-phospho-L-tyrosyl-[protein] + H2O = L-tyrosyl-[protein] + phosphate. Functionally, isoform 1 plays a critical role in signaling transduction pathways and phosphoprotein network topology in red blood cells. May play a role in osteoclast formation and function. Isoform 2 acts as a negative regulator of insulin receptor (IR) signaling in skeletal muscle. Regulates insulin-induced tyrosine phosphorylation of insulin receptor (IR) and insulin receptor substrate 1 (IRS-1), phosphorylation of protein kinase B and glycogen synthase kinase-3 and insulin induced stimulation of glucose uptake. Its function is as follows. Isoform 1 and isoform 2 act as a negative regulator of FceRI-mediated signal transduction leading to cytokine production and degranulation, most likely by acting at the level of SYK to affect downstream events such as phosphorylation of SLP76 and LAT and mobilization of Ca(2+). This is Receptor-type tyrosine-protein phosphatase epsilon (PTPRE) from Homo sapiens (Human).